The following is a 472-amino-acid chain: Phosphoglucosamine mutase (472 aa).

The active-site Phosphoserine intermediate is Ser-123. Ser-123, Asp-262, Asp-264, and Asp-266 together coordinate Mg(2+). Phosphoserine is present on Ser-123.

Belongs to the phosphohexose mutase family. Mg(2+) is required as a cofactor. In terms of processing, activated by phosphorylation.

The enzyme catalyses alpha-D-glucosamine 1-phosphate = D-glucosamine 6-phosphate. Its function is as follows. Catalyzes the conversion of glucosamine-6-phosphate to glucosamine-1-phosphate. The chain is Phosphoglucosamine mutase from Synechococcus elongatus (strain ATCC 33912 / PCC 7942 / FACHB-805) (Anacystis nidulans R2).